Consider the following 322-residue polypeptide: CRISPR-associated endonuclease Cas1 (322 aa).

Residues E149, H214, and E229 each coordinate Mn(2+).

This sequence belongs to the CRISPR-associated endonuclease Cas1 family. In terms of assembly, homodimer, forms a heterotetramer with a Cas2 homodimer. The cofactor is Mg(2+). Mn(2+) serves as cofactor.

Its function is as follows. CRISPR (clustered regularly interspaced short palindromic repeat), is an adaptive immune system that provides protection against mobile genetic elements (viruses, transposable elements and conjugative plasmids). CRISPR clusters contain spacers, sequences complementary to antecedent mobile elements, and target invading nucleic acids. CRISPR clusters are transcribed and processed into CRISPR RNA (crRNA). Acts as a dsDNA endonuclease. Involved in the integration of spacer DNA into the CRISPR cassette. The polypeptide is CRISPR-associated endonuclease Cas1 (Pyrococcus horikoshii (strain ATCC 700860 / DSM 12428 / JCM 9974 / NBRC 100139 / OT-3)).